The sequence spans 120 residues: CLAVATA3/ESR (CLE)-related protein 9 (120 aa).

The signal sequence occupies residues 1 to 26; that stretch reads MTMTHLNRLILISLLFVSLLLKSSTA. N-linked (GlcNAc...) asparagine glycosylation is present at N35. The tract at residues 85 to 120 is disordered; that stretch reads RSSRKQPLLSPPPPEIDPRYGVDKRLVPSGPNPLHN. Positions 100–110 are enriched in basic and acidic residues; sequence IDPRYGVDKRL. P112 and P115 each carry hydroxyproline. An O-linked (Ara...) hydroxyproline glycan is attached at P115.

This sequence belongs to the CLV3/ESR signal peptide family. The O-glycosylation (arabinosylation) of the hydroxyproline Pro-115 enhances binding affinity of the CLE9p peptide for its receptor. In terms of tissue distribution, mostly expressed in leaves, flowers, stems and apex, and, to a lower extent, in seedlings, roots, siliques and pollen.

The protein localises to the secreted. It is found in the extracellular space. Its function is as follows. Extracellular signal peptide that regulates cell fate. Represses root apical meristem maintenance. Regulates the transition of protophloem cells from proliferation to differentiation, thus impinging on postembryonic growth capacity of the root meristem; this signaling pathway requires CRN and CLV2. This is CLAVATA3/ESR (CLE)-related protein 9 from Arabidopsis thaliana (Mouse-ear cress).